The following is a 179-amino-acid chain: Nucleoside-triphosphatase THEP1 (179 aa).

Residues 7 to 14 (GRPGVGKT) and 94 to 101 (LIIVDEIG) contribute to the ATP site.

The protein belongs to the THEP1 NTPase family.

The enzyme catalyses a ribonucleoside 5'-triphosphate + H2O = a ribonucleoside 5'-diphosphate + phosphate + H(+). In terms of biological role, has nucleotide phosphatase activity towards ATP, GTP, CTP, TTP and UTP. May hydrolyze nucleoside diphosphates with lower efficiency. The polypeptide is Nucleoside-triphosphatase THEP1 (Thermotoga petrophila (strain ATCC BAA-488 / DSM 13995 / JCM 10881 / RKU-1)).